Here is a 71-residue protein sequence, read N- to C-terminus: UPF0352 protein VCM66_1964 (71 aa).

This sequence belongs to the UPF0352 family.

This is UPF0352 protein VCM66_1964 from Vibrio cholerae serotype O1 (strain M66-2).